A 317-amino-acid polypeptide reads, in one-letter code: Acetyl-coenzyme A carboxylase carboxyl transferase subunit alpha (317 aa).

Residues lysine 39–arginine 293 form the CoA carboxyltransferase C-terminal domain.

Belongs to the AccA family. As to quaternary structure, acetyl-CoA carboxylase is a heterohexamer composed of biotin carboxyl carrier protein (AccB), biotin carboxylase (AccC) and two subunits each of ACCase subunit alpha (AccA) and ACCase subunit beta (AccD).

The protein resides in the cytoplasm. The catalysed reaction is N(6)-carboxybiotinyl-L-lysyl-[protein] + acetyl-CoA = N(6)-biotinyl-L-lysyl-[protein] + malonyl-CoA. The protein operates within lipid metabolism; malonyl-CoA biosynthesis; malonyl-CoA from acetyl-CoA: step 1/1. Component of the acetyl coenzyme A carboxylase (ACC) complex. First, biotin carboxylase catalyzes the carboxylation of biotin on its carrier protein (BCCP) and then the CO(2) group is transferred by the carboxyltransferase to acetyl-CoA to form malonyl-CoA. The polypeptide is Acetyl-coenzyme A carboxylase carboxyl transferase subunit alpha (Chromohalobacter salexigens (strain ATCC BAA-138 / DSM 3043 / CIP 106854 / NCIMB 13768 / 1H11)).